We begin with the raw amino-acid sequence, 502 residues long: ATP synthase subunit alpha (502 aa).

The interval 115-135 (VDGLGPINTTNTRPIESPAPG) is disordered. 169–176 (GDRQTGKT) is a binding site for ATP.

Belongs to the ATPase alpha/beta chains family. As to quaternary structure, F-type ATPases have 2 components, CF(1) - the catalytic core - and CF(0) - the membrane proton channel. CF(1) has five subunits: alpha(3), beta(3), gamma(1), delta(1), epsilon(1). CF(0) has three main subunits: a(1), b(2) and c(9-12). The alpha and beta chains form an alternating ring which encloses part of the gamma chain. CF(1) is attached to CF(0) by a central stalk formed by the gamma and epsilon chains, while a peripheral stalk is formed by the delta and b chains.

It localises to the cell membrane. The enzyme catalyses ATP + H2O + 4 H(+)(in) = ADP + phosphate + 5 H(+)(out). Its function is as follows. Produces ATP from ADP in the presence of a proton gradient across the membrane. The alpha chain is a regulatory subunit. The sequence is that of ATP synthase subunit alpha from Bacillus cereus (strain G9842).